The chain runs to 122 residues: Biogenesis of lysosome-related organelles complex 1 subunit BLS1 (122 aa).

Ser33 carries the phosphoserine modification.

Belongs to the BLOC1S1 family. Component of the biogenesis of lysosome-related organelles complex-1 (BLOC-1) composed of at least BLI1, BLS1, CNL1, KXD1, SNN1 and VAB2.

It is found in the endosome. Its function is as follows. Component of the biogenesis of lysosome-related organelles complex-1 (BLOC-1), a complex involved in endosomal cargo sorting. This chain is Biogenesis of lysosome-related organelles complex 1 subunit BLS1 (BLS1), found in Saccharomyces cerevisiae (strain YJM789) (Baker's yeast).